The sequence spans 312 residues: MDQKNGSSFTGFILLGFSDRPQLELVLFVVLLIFYIFTLLGNKTIIVLSHLDPHLHTPMYFFFSNLSFLDLCYTTGIVPQLLVNLRGADKSISYGGCVVQLYISLGLGSTECVLLGVMVFDRYAAVCRPLHYTVVMHPCLYVLMASTSWVIGFANSLLQTVLILLLTLCGRNKLEHFLCEVPPLLKLACVDTTMNESELFFVSVIILLVPVALIIFSYSQIVRAVMRIKLATGQRKVFGTCGSHLTVVSLFYGTAIYAYLQPGNNYSQDQGKFISLFYTIITPMINPLIYTLRNKDVKGALKKVLWKNYDSR.

The Extracellular segment spans residues 1-25 (MDQKNGSSFTGFILLGFSDRPQLEL). N-linked (GlcNAc...) asparagine glycosylation occurs at asparagine 5. A helical transmembrane segment spans residues 26-49 (VLFVVLLIFYIFTLLGNKTIIVLS). The Cytoplasmic portion of the chain corresponds to 50–57 (HLDPHLHT). Residues 58 to 79 (PMYFFFSNLSFLDLCYTTGIVP) form a helical membrane-spanning segment. Residues 80–100 (QLLVNLRGADKSISYGGCVVQ) are Extracellular-facing. A disulfide bond links cysteine 97 and cysteine 189. A helical membrane pass occupies residues 101 to 120 (LYISLGLGSTECVLLGVMVF). Residues 121–139 (DRYAAVCRPLHYTVVMHPC) lie on the Cytoplasmic side of the membrane. Residues 140–158 (LYVLMASTSWVIGFANSLL) form a helical membrane-spanning segment. The Extracellular segment spans residues 159–195 (QTVLILLLTLCGRNKLEHFLCEVPPLLKLACVDTTMN). Residue asparagine 195 is glycosylated (N-linked (GlcNAc...) asparagine). A helical membrane pass occupies residues 196-219 (ESELFFVSVIILLVPVALIIFSYS). Residues 220 to 236 (QIVRAVMRIKLATGQRK) lie on the Cytoplasmic side of the membrane. A helical membrane pass occupies residues 237–259 (VFGTCGSHLTVVSLFYGTAIYAY). Over 260-272 (LQPGNNYSQDQGK) the chain is Extracellular. The N-linked (GlcNAc...) asparagine glycan is linked to asparagine 265. Residues 273–292 (FISLFYTIITPMINPLIYTL) traverse the membrane as a helical segment. The Cytoplasmic portion of the chain corresponds to 293 to 312 (RNKDVKGALKKVLWKNYDSR).

Belongs to the G-protein coupled receptor 1 family.

The protein resides in the cell membrane. In terms of biological role, odorant receptor. The chain is Olfactory receptor 2B8 from Homo sapiens (Human).